The sequence spans 672 residues: DNA ligase (672 aa).

Residues 37-41 (DAEYD), 86-87 (SL), and Glu-115 each bind NAD(+). The active-site N6-AMP-lysine intermediate is Lys-117. NAD(+) is bound by residues Arg-138, Glu-172, Lys-288, and Lys-312. Residues Cys-406, Cys-409, Cys-424, and Cys-429 each coordinate Zn(2+). Positions 590-672 (DISSTFAGKT…LQEIQQSKQV (83 aa)) constitute a BRCT domain.

Belongs to the NAD-dependent DNA ligase family. LigA subfamily. Mg(2+) serves as cofactor. It depends on Mn(2+) as a cofactor.

It catalyses the reaction NAD(+) + (deoxyribonucleotide)n-3'-hydroxyl + 5'-phospho-(deoxyribonucleotide)m = (deoxyribonucleotide)n+m + AMP + beta-nicotinamide D-nucleotide.. DNA ligase that catalyzes the formation of phosphodiester linkages between 5'-phosphoryl and 3'-hydroxyl groups in double-stranded DNA using NAD as a coenzyme and as the energy source for the reaction. It is essential for DNA replication and repair of damaged DNA. The chain is DNA ligase from Anoxybacillus flavithermus (strain DSM 21510 / WK1).